Consider the following 126-residue polypeptide: Ribonuclease VapC23 (126 aa).

A PINc domain is found at 2–118 (IFVDTNVFMY…GVTRIKTFDH (117 aa)). Residues Asp-5 and Asp-98 each contribute to the Mg(2+) site.

It belongs to the PINc/VapC protein family. Mg(2+) serves as cofactor.

Its function is as follows. Toxic component of a type II toxin-antitoxin (TA) system. An RNase. The cognate antitoxin is VapB23. The protein is Ribonuclease VapC23 of Mycobacterium tuberculosis (strain CDC 1551 / Oshkosh).